The following is a 329-amino-acid chain: Glycerol-3-phosphate dehydrogenase [NAD(P)+] (329 aa).

Residues S13, W14, H34, and K105 each contribute to the NADPH site. Sn-glycerol 3-phosphate contacts are provided by K105, G134, and S136. NADPH is bound at residue A138. Sn-glycerol 3-phosphate contacts are provided by K189, D242, S252, R253, and N254. Catalysis depends on K189, which acts as the Proton acceptor. R253 provides a ligand contact to NADPH. NADPH contacts are provided by V277 and E279.

Belongs to the NAD-dependent glycerol-3-phosphate dehydrogenase family.

The protein localises to the cytoplasm. The enzyme catalyses sn-glycerol 3-phosphate + NAD(+) = dihydroxyacetone phosphate + NADH + H(+). It catalyses the reaction sn-glycerol 3-phosphate + NADP(+) = dihydroxyacetone phosphate + NADPH + H(+). Its pathway is membrane lipid metabolism; glycerophospholipid metabolism. Functionally, catalyzes the reduction of the glycolytic intermediate dihydroxyacetone phosphate (DHAP) to sn-glycerol 3-phosphate (G3P), the key precursor for phospholipid synthesis. In Legionella pneumophila (strain Lens), this protein is Glycerol-3-phosphate dehydrogenase [NAD(P)+].